Here is a 406-residue protein sequence, read N- to C-terminus: Tryptophan synthase beta chain (406 aa).

Lys-99 is subject to N6-(pyridoxal phosphate)lysine.

This sequence belongs to the TrpB family. As to quaternary structure, tetramer of two alpha and two beta chains. Requires pyridoxal 5'-phosphate as cofactor.

The enzyme catalyses (1S,2R)-1-C-(indol-3-yl)glycerol 3-phosphate + L-serine = D-glyceraldehyde 3-phosphate + L-tryptophan + H2O. The protein operates within amino-acid biosynthesis; L-tryptophan biosynthesis; L-tryptophan from chorismate: step 5/5. Its function is as follows. The beta subunit is responsible for the synthesis of L-tryptophan from indole and L-serine. This Brucella melitensis biotype 2 (strain ATCC 23457) protein is Tryptophan synthase beta chain.